The chain runs to 393 residues: NAD(P)H-quinone oxidoreductase subunit H, chloroplastic (393 aa).

The protein belongs to the complex I 49 kDa subunit family. As to quaternary structure, NDH is composed of at least 16 different subunits, 5 of which are encoded in the nucleus.

It is found in the plastid. Its subcellular location is the chloroplast thylakoid membrane. The enzyme catalyses a plastoquinone + NADH + (n+1) H(+)(in) = a plastoquinol + NAD(+) + n H(+)(out). It catalyses the reaction a plastoquinone + NADPH + (n+1) H(+)(in) = a plastoquinol + NADP(+) + n H(+)(out). Functionally, NDH shuttles electrons from NAD(P)H:plastoquinone, via FMN and iron-sulfur (Fe-S) centers, to quinones in the photosynthetic chain and possibly in a chloroplast respiratory chain. The immediate electron acceptor for the enzyme in this species is believed to be plastoquinone. Couples the redox reaction to proton translocation, and thus conserves the redox energy in a proton gradient. This is NAD(P)H-quinone oxidoreductase subunit H, chloroplastic from Fagopyrum esculentum subsp. ancestrale (Wild buckwheat).